The chain runs to 485 residues: MAAHDLTQAICQNLDPHLILPLLDHCVDLDIYNEADLKRAKMQVLSRTRLIEQALELADATEKKDLDARMRSISEEEKTWEKQLEPVFEMFENDEVLSIIEATKNKDSLLSELEPYGFTENTADLLYHGSKFYFDRGQYDLAHGLLYNYRAVSTDDKLKFTALWGKLAAAILSGNWQTAQEDMYLLLEYIDGGKNELTAVEQLQQRNWLLHWSLFVFFNQPDGPDGIVDLFMNKETCTNAMQTIAPHLFRYATAVAIMSRRKKRDVMWEFVGIARQDKDLGDDPVVGFLVSLIKDFDFVTAEEKLQQCREVLSKDYFLAEMTDEFINTAQLYLFEVYLRVHSRVSIKNAATRLGKSEDDAEEWLVKLIRDAKLDAQIDPASGEIHITKPVTTVYQHVLDRTKNLQYRTYVIVESLHHLHPNGAFHHSNSSIPALFRRMMNEQLQGGGKSNKKGDYKKGDYKKGGDFKKGGDFKKGGDHKKRAWVK.

The 173-residue stretch at 219 to 391 (NQPDGPDGIV…GEIHITKPVT (173 aa)) folds into the PCI domain. A disordered region spans residues 444–485 (QGGGKSNKKGDYKKGDYKKGGDFKKGGDFKKGGDHKKRAWVK). Residues 451–475 (KKGDYKKGDYKKGGDFKKGGDFKKG) show a composition bias toward basic and acidic residues. A compositionally biased stretch (basic residues) spans 476–485 (GDHKKRAWVK).

This sequence belongs to the eIF-3 subunit E family. Component of the eukaryotic translation initiation factor 3 (eIF-3) complex.

Its subcellular location is the cytoplasm. Component of the eukaryotic translation initiation factor 3 (eIF-3) complex, which is involved in protein synthesis of a specialized repertoire of mRNAs and, together with other initiation factors, stimulates binding of mRNA and methionyl-tRNAi to the 40S ribosome. The eIF-3 complex specifically targets and initiates translation of a subset of mRNAs involved in cell proliferation. The protein is Eukaryotic translation initiation factor 3 subunit E of Monosiga brevicollis (Choanoflagellate).